A 171-amino-acid chain; its full sequence is Neuronal vesicle trafficking-associated protein 2 (171 aa).

Over residues 1–10 the composition is skewed to polar residues; sequence MVKLNSNPSE. Residues 1 to 21 form a disordered region; that stretch reads MVKLNSNPSEKGTKPPSVEDG. The Cytoplasmic segment spans residues 1-71; it reads MVKLNSNPSE…FRVPKIAEFT (71 aa). The chain crosses the membrane as a helical; Signal-anchor for type II membrane protein span at residues 72 to 92; sequence VTILVSLALAFLACIVFLVVY. At 93–171 the chain is on the lumenal side; that stretch reads KAFTYDHSCP…EPKPPKTQGH (79 aa).

The protein belongs to the NSG family.

The protein localises to the membrane. The protein resides in the golgi apparatus. It is found in the trans-Golgi network membrane. It localises to the cell projection. Its subcellular location is the dendrite. The protein localises to the endosome membrane. The protein resides in the early endosome membrane. It is found in the late endosome membrane. It localises to the lysosome lumen. Its subcellular location is the cytoplasmic vesicle membrane. The protein localises to the golgi stack membrane. The protein resides in the endosome. It is found in the multivesicular body membrane. The protein is Neuronal vesicle trafficking-associated protein 2 of Homo sapiens (Human).